Reading from the N-terminus, the 488-residue chain is Histone deacetylase 2 (488 aa).

The segment at 9 to 322 (KKKVCYYYDG…WTYETAVALD (314 aa)) is histone deacetylase. 2 residues coordinate 1D-myo-inositol 1,4,5,6-tetrakisphosphate: glycine 28 and lysine 32. The active site involves histidine 142. 3 residues coordinate Zn(2+): aspartate 177, histidine 179, and aspartate 265. 1D-myo-inositol 1,4,5,6-tetrakisphosphate is bound at residue arginine 271. Positions 389 to 488 (AVHEDSGDED…GAKSEQLSNP (100 aa)) are disordered. Residues 402–417 (PDKRISIRASDKRIAC) are compositionally biased toward basic and acidic residues. Positions 418-428 (DEEFSDSEDEG) are enriched in acidic residues. The segment covering 429–481 (EGGRRNVADHKKGAKKARIEEDKKETEDKKADVKEEDKSKDNSGEKTDTKGAK) has biased composition (basic and acidic residues).

Belongs to the histone deacetylase family. HD type 1 subfamily. Zn(2+) is required as a cofactor.

The protein localises to the nucleus. It localises to the cytoplasm. It carries out the reaction N(6)-acetyl-L-lysyl-[histone] + H2O = L-lysyl-[histone] + acetate. The catalysed reaction is N(6)-acetyl-L-lysyl-[protein] + H2O = L-lysyl-[protein] + acetate. It catalyses the reaction N(6)-(2E)-butenoyl-L-lysyl-[protein] + H2O = (2E)-2-butenoate + L-lysyl-[protein]. The enzyme catalyses N(6)-(2-hydroxyisobutanoyl)-L-lysyl-[protein] + H2O = 2-hydroxy-2-methylpropanoate + L-lysyl-[protein]. It carries out the reaction N(6)-[(S)-lactoyl]-L-lysyl-[protein] + H2O = (S)-lactate + L-lysyl-[protein]. Inositol tetraphosphate (1D-myo-inositol 1,4,5,6-tetrakisphosphate) may act as an intermolecular glue between HDAC2 and N-Cor repressor complex components. Its function is as follows. Histone deacetylase that catalyzes the deacetylation of lysine residues on the N-terminal part of the core histones (H2A, H2B, H3 and H4). Histone deacetylation gives a tag for epigenetic repression and plays an important role in transcriptional regulation, cell cycle progression and developmental events. Histone deacetylases act via the formation of large multiprotein complexes. Also deacetylates non-histone proteins. In addition to protein deacetylase activity, also acts as a protein-lysine deacylase by recognizing other acyl groups: catalyzes removal of (2E)-butenoyl (crotonyl), lactoyl (lactyl) and 2-hydroxyisobutanoyl (2-hydroxyisobutyryl) acyl groups from lysine residues, leading to protein decrotonylation, delactylation and de-2-hydroxyisobutyrylation, respectively. This Gallus gallus (Chicken) protein is Histone deacetylase 2 (HDAC2).